A 488-amino-acid chain; its full sequence is uncharacterized protein (488 aa).

This sequence belongs to the protein kinase superfamily. ADCK protein kinase family.

This is an uncharacterized protein from Mycobacterium tuberculosis (strain CDC 1551 / Oshkosh).